Reading from the N-terminus, the 255-residue chain is Cell division protein ZapD (255 aa).

The protein belongs to the ZapD family. As to quaternary structure, interacts with FtsZ.

It localises to the cytoplasm. Cell division factor that enhances FtsZ-ring assembly. Directly interacts with FtsZ and promotes bundling of FtsZ protofilaments, with a reduction in FtsZ GTPase activity. The sequence is that of Cell division protein ZapD from Methylococcus capsulatus (strain ATCC 33009 / NCIMB 11132 / Bath).